Here is a 58-residue protein sequence, read N- to C-terminus: Large ribosomal subunit protein uL30 (58 aa).

This sequence belongs to the universal ribosomal protein uL30 family. As to quaternary structure, part of the 50S ribosomal subunit.

The chain is Large ribosomal subunit protein uL30 from Pelobacter propionicus (strain DSM 2379 / NBRC 103807 / OttBd1).